The sequence spans 191 residues: Thymidine kinase (191 aa).

ATP is bound by residues 9-16 and 85-88; these read GSMNSGKT and DESQ. The active-site Proton acceptor is E86. Positions 143, 146, 181, and 184 each coordinate Zn(2+).

This sequence belongs to the thymidine kinase family. Homotetramer.

The protein resides in the cytoplasm. The enzyme catalyses thymidine + ATP = dTMP + ADP + H(+). This Listeria monocytogenes serotype 4b (strain F2365) protein is Thymidine kinase.